The chain runs to 175 residues: uncharacterized protein (175 aa).

It belongs to the asfivirus B175L family.

This is an uncharacterized protein from Ornithodoros (relapsing fever ticks).